Reading from the N-terminus, the 258-residue chain is Imidazole glycerol phosphate synthase subunit HisF (258 aa).

Catalysis depends on residues D11 and D130.

It belongs to the HisA/HisF family. As to quaternary structure, heterodimer of HisH and HisF.

It localises to the cytoplasm. The catalysed reaction is 5-[(5-phospho-1-deoxy-D-ribulos-1-ylimino)methylamino]-1-(5-phospho-beta-D-ribosyl)imidazole-4-carboxamide + L-glutamine = D-erythro-1-(imidazol-4-yl)glycerol 3-phosphate + 5-amino-1-(5-phospho-beta-D-ribosyl)imidazole-4-carboxamide + L-glutamate + H(+). It functions in the pathway amino-acid biosynthesis; L-histidine biosynthesis; L-histidine from 5-phospho-alpha-D-ribose 1-diphosphate: step 5/9. Its function is as follows. IGPS catalyzes the conversion of PRFAR and glutamine to IGP, AICAR and glutamate. The HisF subunit catalyzes the cyclization activity that produces IGP and AICAR from PRFAR using the ammonia provided by the HisH subunit. This Yersinia pestis (strain Pestoides F) protein is Imidazole glycerol phosphate synthase subunit HisF.